The chain runs to 257 residues: Zinc-finger homeodomain protein 6 (257 aa).

The interval 1 to 35 (MEFRGHDEPVDEMGVAYGRTPPSSSSSPAASASAG) is disordered. The span at 21 to 35 (PPSSSSSPAASASAG) shows a compositional bias: low complexity. The ZF-HD dimerization-type; degenerate zinc-finger motif lies at 45–93 (YHECLRNHAAAMGGHVVDGCGEFMPMPGDAADALKCAACGCHRSFHRKD). Over residues 106 to 125 (PSPPTPRVPLLMPPPQPQPH) the composition is skewed to pro residues. Disordered stretches follow at residues 106–182 (PSPP…TKFT) and 228–257 (NNKS…QQQQ). A compositionally biased stretch (low complexity) spans 141 to 155 (YHHTPSGSGGTTTES). The homeobox DNA-binding region spans 174–237 (RKRFRTKFTP…NNKSSIGSSS (64 aa)). Residues 242-257 (RRQPQEQQSQQQQQQQ) are compositionally biased toward low complexity.

In terms of assembly, homo- and heterodimer with other ZFHD proteins.

The protein resides in the nucleus. In terms of biological role, putative transcription factor. In Oryza sativa subsp. indica (Rice), this protein is Zinc-finger homeodomain protein 6 (ZHD6).